A 427-amino-acid chain; its full sequence is Histidine--tRNA ligase (427 aa).

The protein belongs to the class-II aminoacyl-tRNA synthetase family. In terms of assembly, homodimer.

The protein localises to the cytoplasm. The enzyme catalyses tRNA(His) + L-histidine + ATP = L-histidyl-tRNA(His) + AMP + diphosphate + H(+). The sequence is that of Histidine--tRNA ligase from Aster yellows witches'-broom phytoplasma (strain AYWB).